We begin with the raw amino-acid sequence, 383 residues long: S-adenosylmethionine synthase (383 aa).

His16 lines the ATP pocket. Residue Asp18 participates in Mg(2+) binding. Glu44 provides a ligand contact to K(+). Positions 57 and 98 each coordinate L-methionine. The segment at 98–108 (QSPDIAMGVDI) is flexible loop. Residues 158-160 (DQK), 226-227 (RF), Asp235, 241-242 (RK), Ala258, and Lys262 each bind ATP. Asp235 serves as a coordination point for L-methionine. Residue Lys266 participates in L-methionine binding.

Belongs to the AdoMet synthase family. In terms of assembly, homotetramer; dimer of dimers. Requires Mg(2+) as cofactor. K(+) is required as a cofactor.

Its subcellular location is the cytoplasm. The catalysed reaction is L-methionine + ATP + H2O = S-adenosyl-L-methionine + phosphate + diphosphate. It participates in amino-acid biosynthesis; S-adenosyl-L-methionine biosynthesis; S-adenosyl-L-methionine from L-methionine: step 1/1. Its function is as follows. Catalyzes the formation of S-adenosylmethionine (AdoMet) from methionine and ATP. The overall synthetic reaction is composed of two sequential steps, AdoMet formation and the subsequent tripolyphosphate hydrolysis which occurs prior to release of AdoMet from the enzyme. The polypeptide is S-adenosylmethionine synthase (Fusobacterium nucleatum subsp. nucleatum (strain ATCC 25586 / DSM 15643 / BCRC 10681 / CIP 101130 / JCM 8532 / KCTC 2640 / LMG 13131 / VPI 4355)).